A 386-amino-acid chain; its full sequence is Succinate--CoA ligase [ADP-forming] subunit beta (386 aa).

In terms of domain architecture, ATP-grasp spans 9–244; that stretch reads KELLKQFGVP…LDEEDPAEIE (236 aa). Residues lysine 46, 53–55, glutamate 99, alanine 102, and glutamate 107 each bind ATP; that span reads GRG. 2 residues coordinate Mg(2+): asparagine 199 and aspartate 213. Substrate is bound by residues asparagine 264 and 321-323; that span reads GIM.

Belongs to the succinate/malate CoA ligase beta subunit family. As to quaternary structure, heterotetramer of two alpha and two beta subunits. It depends on Mg(2+) as a cofactor.

The catalysed reaction is succinate + ATP + CoA = succinyl-CoA + ADP + phosphate. It catalyses the reaction GTP + succinate + CoA = succinyl-CoA + GDP + phosphate. The protein operates within carbohydrate metabolism; tricarboxylic acid cycle; succinate from succinyl-CoA (ligase route): step 1/1. In terms of biological role, succinyl-CoA synthetase functions in the citric acid cycle (TCA), coupling the hydrolysis of succinyl-CoA to the synthesis of either ATP or GTP and thus represents the only step of substrate-level phosphorylation in the TCA. The beta subunit provides nucleotide specificity of the enzyme and binds the substrate succinate, while the binding sites for coenzyme A and phosphate are found in the alpha subunit. This chain is Succinate--CoA ligase [ADP-forming] subunit beta, found in Bordetella avium (strain 197N).